Here is a 65-residue protein sequence, read N- to C-terminus: Temporin-LK1 (65 aa).

An N-terminal signal peptide occupies residues 1-22 (MFTMKKSLLLLFFLGAINLPLC). The propeptide occupies 23–44 (QEERNAEEERRDGDDEGSVEVQ). Phe63 is modified (phenylalanine amide).

Expressed by the skin glands.

The protein localises to the secreted. Its function is as follows. Has antimicrobial activity against Gram-positive bacteria S.aureus ATCC 2592 (MIC=2.5 uM), S.aureus ATCC 43300 (MIC=2.5 uM) and B.subtilis (MIC=15.0 uM), against Gram-negative bacteria E.coli ML-35P (MIC=30.0 uM), P.aeruginosa PA01 (MIC=2.5 uM) and P.aeruginosa ATCC 27853 (MIC=2.5 uM) and against fungus C.albicans ATCC 2002 (MIC=5.0 uM). This chain is Temporin-LK1, found in Limnonectes kuhlii (Kuhl's Creek frog).